Consider the following 244-residue polypeptide: DNA repair protein RecO (244 aa).

Belongs to the RecO family.

Involved in DNA repair and RecF pathway recombination. The sequence is that of DNA repair protein RecO from Polynucleobacter necessarius subsp. necessarius (strain STIR1).